The following is a 324-amino-acid chain: MLQQKQSLLEHKPVLSKELEKLVNHYRTLSLNGQCAQYIPALREANQTYLGLYVVHSNGIEIKSGDWQVPFTLQSISKIINFIAACLDRGITYVLDRVDVEPTGDPFNSMVRLEMRKTGKPFNPMINAGAITVASLLSGKSPTEKLESVYSLVEKMLGRRASANEAVFHSEWQTAHRNRSLAYYLKDTGYLESEVDDALHVYFTLCAIEVATKDIAKIGLILANNGYDPLSHQQIFPKEVAKLTKALMLTCGMYNASGTFAAHIGIPAKSGVSGGIMAAVPARGRSDEAMGIGIYGPAIDDFGNSVAGVALLKHLSHMWDLSIF.

Substrate-binding residues include S75, N127, E171, N178, Y202, Y254, and V272.

Belongs to the glutaminase family. Homotetramer.

It catalyses the reaction L-glutamine + H2O = L-glutamate + NH4(+). This is Glutaminase 2 from Halalkalibacterium halodurans (strain ATCC BAA-125 / DSM 18197 / FERM 7344 / JCM 9153 / C-125) (Bacillus halodurans).